A 4481-amino-acid chain; its full sequence is Dynein axonemal heavy chain 17 (4481 aa).

The interval 1–1792 is stem; the sequence is MPDLRIDYLE…FANICDAQIK (1792 aa). A Kelch 1 repeat occupies 521–569; sequence LLYMCGGLLERPLILVEVVPRYSVMLEMFNTELDNAKLMYDAQMAASAD. Positions 759 to 826 form a coiled coil; that stretch reads ENVMEYIQEM…GRVANLNKRY (68 aa). 2 TPR repeats span residues 1533 to 1566 and 1688 to 1722; these read VVEA…YLET and IWWT…QLNA. AAA regions lie at residues 1793–2014, 2074–2295, 2401–2649, and 2747–2996; these read YSYE…VLVV, KIIK…IGFK, ELDP…IFQG, and SYNE…ERRY. ATP-binding positions include 1831–1838 and 2112–2119; these read GPAGTGKT and GNAGSGKS. The stretch at 2229–2275 is one Kelch 2 repeat; that stretch reads ISHLRTATPATVSRAGILYINPADLGWNPVVSSWIERRKVQSEKANL. Residues 2439–2446 and 2785–2792 each bind ATP; these read GNAGTGKS and GVGGSGKQ. The stretch at 2782–2834 is one Kelch 3 repeat; that stretch reads LLVGVGGSGKQSLSRLAAYISALDVFQITLKKGYAIPDLKMDLATQYIKSAVK. Coiled-coil stretches lie at residues 3011–3071 and 3241–3293; these read YQNL…IQVV and DVAP…EKIK. The interval 3011-3297 is stalk; that stretch reads YQNLLAKKRM…TAEKIKCQQE (287 aa). AAA regions lie at residues 3389–3616 and 3826–4059; these read LTDD…EIEE and VKNF…VLYN. One copy of the TPR 3 repeat lies at 4138–4173; it reads PESPYLYGLHPNAEIGFLTVTSEKLFRTVLEMQPKE. Kelch repeat units follow at residues 4272–4321 and 4339–4385; these read NLGL…DLLQ and VWLA…DMTA.

Belongs to the dynein heavy chain family. In terms of assembly, consists of at least two heavy chains and a number of intermediate and light chains.

It localises to the cytoplasm. The protein localises to the cytoskeleton. The protein resides in the flagellum axoneme. Functionally, force generating protein component of the outer dynein arms (ODAs) in the sperm flagellum. Produces force towards the minus ends of microtubules. Dynein has ATPase activity; the force-producing power stroke is thought to occur on release of ADP. Plays a major role in sperm motility, implicated in sperm flagellar assembly and beating. In Mus musculus (Mouse), this protein is Dynein axonemal heavy chain 17.